A 203-amino-acid polypeptide reads, in one-letter code: Small ribosomal subunit protein uS4 (203 aa).

The S4 RNA-binding domain occupies 93–156; sequence TRLDNLVFRL…QNLAIVNEAI (64 aa).

It belongs to the universal ribosomal protein uS4 family. Part of the 30S ribosomal subunit. Contacts protein S5. The interaction surface between S4 and S5 is involved in control of translational fidelity.

In terms of biological role, one of the primary rRNA binding proteins, it binds directly to 16S rRNA where it nucleates assembly of the body of the 30S subunit. Functionally, with S5 and S12 plays an important role in translational accuracy. This chain is Small ribosomal subunit protein uS4, found in Lacticaseibacillus casei (strain BL23) (Lactobacillus casei).